The primary structure comprises 349 residues: sn-glycerol-3-phosphate import ATP-binding protein UgpC (349 aa).

The ABC transporter domain maps to 4 to 235 (VTLTAVRKVY…PASTFVASFM (232 aa)). An ATP-binding site is contributed by 37 to 44 (GPSGCGKS).

This sequence belongs to the ABC transporter superfamily. sn-glycerol-3-phosphate importer (TC 3.A.1.1.3) family. As to quaternary structure, the complex is composed of two ATP-binding proteins (UgpC), two transmembrane proteins (UgpA and UgpE) and a solute-binding protein (UgpB).

The protein resides in the cell inner membrane. It carries out the reaction sn-glycerol 3-phosphate(out) + ATP + H2O = sn-glycerol 3-phosphate(in) + ADP + phosphate + H(+). Its function is as follows. Part of the ABC transporter complex UgpBAEC involved in sn-glycerol-3-phosphate (G3P) import. Responsible for energy coupling to the transport system. This Jannaschia sp. (strain CCS1) protein is sn-glycerol-3-phosphate import ATP-binding protein UgpC.